Reading from the N-terminus, the 401-residue chain is Nicotinate phosphoribosyltransferase (401 aa).

Histidine 221 bears the Phosphohistidine; by autocatalysis mark.

It belongs to the NAPRTase family. Transiently phosphorylated on a His residue during the reaction cycle. Phosphorylation strongly increases the affinity for substrates and increases the rate of nicotinate D-ribonucleotide production. Dephosphorylation regenerates the low-affinity form of the enzyme, leading to product release.

The catalysed reaction is nicotinate + 5-phospho-alpha-D-ribose 1-diphosphate + ATP + H2O = nicotinate beta-D-ribonucleotide + ADP + phosphate + diphosphate. It participates in cofactor biosynthesis; NAD(+) biosynthesis; nicotinate D-ribonucleotide from nicotinate: step 1/1. Functionally, catalyzes the synthesis of beta-nicotinate D-ribonucleotide from nicotinate and 5-phospho-D-ribose 1-phosphate at the expense of ATP. This is Nicotinate phosphoribosyltransferase from Pectobacterium carotovorum subsp. carotovorum (strain PC1).